Reading from the N-terminus, the 126-residue chain is Glycine cleavage system H protein (126 aa).

Residues 22-104 (VAYVGITDYA…YGKGWLIKIS (83 aa)) enclose the Lipoyl-binding domain. K63 is subject to N6-lipoyllysine.

This sequence belongs to the GcvH family. The glycine cleavage system is composed of four proteins: P, T, L and H. The cofactor is (R)-lipoate.

The glycine cleavage system catalyzes the degradation of glycine. The H protein shuttles the methylamine group of glycine from the P protein to the T protein. This chain is Glycine cleavage system H protein, found in Parabacteroides distasonis (strain ATCC 8503 / DSM 20701 / CIP 104284 / JCM 5825 / NCTC 11152).